Reading from the N-terminus, the 374-residue chain is MRIERDLHMATGDGETSYTKNSRIQEKTMFQIKPVLEEATRAVYTALHPQTMVVADLGCSSGPNTLRFVSEVIGIIARHCKEYGRQHDHTQLQFFLNDLPGNDFNNLFQLIQQFNKSTAINHKSEAAEALPPPCYISGLPGSYYTRIFPSESVHLFHSLFCLQWRSEAPEGNKKTCLDIYITKTMSPSMVKLFQQQFQKDFSLFLRLRYEELVSGGQMVLTFIGRKHENVFTGESNHLYGLLAQSLKSLVDEGLVEKEKLESFYLPMYSPSVGEVEAILKQVGLFNMNHVKVFQTNWDPYDDLESDVVHNSIRSGENVAKCLRAVMQPLVASQFGEPILDKLFKEYARRVAKHLENEKTKHAIIVLSIEKAIHL.

Tyrosine 18 is a binding site for S-adenosyl-L-homocysteine. Anthranilate is bound at residue glutamine 25. Positions 59, 64, 98, 99, 142, and 143 each coordinate S-adenosyl-L-homocysteine. Anthranilate is bound at residue tryptophan 164. Mg(2+)-binding residues include glutamate 261 and phenylalanine 263.

This sequence belongs to the methyltransferase superfamily. Type-7 methyltransferase family. SABATH subfamily.

The catalysed reaction is anthranilate + S-adenosyl-L-methionine = O-methyl anthranilate + S-adenosyl-L-homocysteine. Methyltransferase involved in the biosynthesis of methyl anthranilate in response to stresses. Utilizes anthranilic acid as substrate. Produces exclusively the O-methyl ester. This is Anthranilate O-methyltransferase 2 (AAMT2) from Zea mays (Maize).